The sequence spans 171 residues: Homeobox protein engrailed-1-B (171 aa).

Disordered regions lie at residues 1 to 41 (EDPG…NAAP) and 60 to 86 (YSDR…KRPR). Residues 15–29 (PDSDTPSDSSKGSDS) are compositionally biased toward low complexity. A DNA-binding region (homeobox) is located at residues 82–141 (DKRPRTAFTAEQLQRLKAEFQANRYITEQRRQTLAQELSLNESQIKIWFQNKRAKIKKAS).

This sequence belongs to the engrailed homeobox family.

The protein localises to the nucleus. In terms of biological role, required for proper formation of the apical ectodermal ridge and correct dorsal-ventral patterning in the limb. The polypeptide is Homeobox protein engrailed-1-B (en1-b) (Xenopus laevis (African clawed frog)).